The chain runs to 334 residues: UDP-N-acetylglucosamine--N-acetylmuramyl-(pentapeptide) pyrophosphoryl-undecaprenol N-acetylglucosamine transferase (334 aa).

Residues 11–13 (TGG), N125, S185, I229, and Q274 contribute to the UDP-N-acetyl-alpha-D-glucosamine site.

This sequence belongs to the glycosyltransferase 28 family. MurG subfamily.

It is found in the cell inner membrane. The enzyme catalyses di-trans,octa-cis-undecaprenyl diphospho-N-acetyl-alpha-D-muramoyl-L-alanyl-D-glutamyl-meso-2,6-diaminopimeloyl-D-alanyl-D-alanine + UDP-N-acetyl-alpha-D-glucosamine = di-trans,octa-cis-undecaprenyl diphospho-[N-acetyl-alpha-D-glucosaminyl-(1-&gt;4)]-N-acetyl-alpha-D-muramoyl-L-alanyl-D-glutamyl-meso-2,6-diaminopimeloyl-D-alanyl-D-alanine + UDP + H(+). Its pathway is cell wall biogenesis; peptidoglycan biosynthesis. In terms of biological role, cell wall formation. Catalyzes the transfer of a GlcNAc subunit on undecaprenyl-pyrophosphoryl-MurNAc-pentapeptide (lipid intermediate I) to form undecaprenyl-pyrophosphoryl-MurNAc-(pentapeptide)GlcNAc (lipid intermediate II). In Thermosipho africanus (strain TCF52B), this protein is UDP-N-acetylglucosamine--N-acetylmuramyl-(pentapeptide) pyrophosphoryl-undecaprenol N-acetylglucosamine transferase.